A 141-amino-acid chain; its full sequence is Hemoglobin subunit alpha (141 aa).

The Globin domain maps to 1–141 (VLSAADKSNV…VSTVLTSKYR (141 aa)). Ser3 is subject to Phosphoserine. Lys7 and Lys11 each carry N6-succinyllysine. Residue Lys16 is modified to N6-acetyllysine; alternate. Lys16 bears the N6-succinyllysine; alternate mark. Tyr24 carries the post-translational modification Phosphotyrosine. At Ser35 the chain carries Phosphoserine. At Lys40 the chain carries N6-succinyllysine. Residue Ser49 is modified to Phosphoserine. His58 lines the O2 pocket. His87 is a heme b binding site. At Ser102 the chain carries Phosphoserine. Thr108 is subject to Phosphothreonine. Ser124 carries the post-translational modification Phosphoserine. Phosphothreonine occurs at positions 134 and 137. Ser138 bears the Phosphoserine mark.

The protein belongs to the globin family. Heterotetramer of two alpha chains and two beta chains. As to expression, red blood cells.

In terms of biological role, involved in oxygen transport from the lung to the various peripheral tissues. Its function is as follows. Hemopressin acts as an antagonist peptide of the cannabinoid receptor CNR1. Hemopressin-binding efficiently blocks cannabinoid receptor CNR1 and subsequent signaling. This is Hemoglobin subunit alpha (HBA) from Felis catus (Cat).